A 438-amino-acid polypeptide reads, in one-letter code: MASKFRLLLENAEQIVVVCTKEEQYLLEDGMQHLAVLEKSSLVIGNDGCIKAVGPAETIRNHFSNASFENIIDCSGKCILPGFVDAHIHPVWAGDRVHEFAMKLAGATYMDIHQAGGGINYTVEHTTAASVEELFCSFKHRLERMLRAGTTLVECKSGYGLKLETELKMLRVIERAHRELDIAVSSTYCGAHSVPKGKSAQEAADDIINNHLPALKQMSLNGEIHVDNIDVFCEKGVFDLESTGRILQAGKAIGLNLNFHGDELNPMNSAELGAELGAHAVSHLEEVSDKGIAALAKAKCSAVLLPTTAYILRLKQPRARDMLKAGVIVSLGSDFNPNAYCFSMPMVMHLACVNMKMSLKEALAAATINAAYALGRAHTHGSLEVGKQGDVVVINASRWEHVIYQFGGHQELIECVVIKGKIVYKNEKFSICRMDLLK.

Residues Tyr-159 and His-192 each contribute to the 4-imidazolone-5-propanoate site. Position 159 (Tyr-159) interacts with N-formimidoyl-L-glutamate. Residue His-260 participates in Fe(3+) binding. Position 260 (His-260) interacts with Zn(2+). Glu-263 is a binding site for 4-imidazolone-5-propanoate. Residue Asp-334 coordinates Fe(3+). Asp-334 is a binding site for Zn(2+). Asn-336 is a binding site for N-formimidoyl-L-glutamate.

The protein belongs to the metallo-dependent hydrolases superfamily. HutI family. The cofactor is Zn(2+). Fe(3+) serves as cofactor.

It carries out the reaction 4-imidazolone-5-propanoate + H2O = N-formimidoyl-L-glutamate. It participates in amino-acid degradation; L-histidine degradation into L-glutamate; N-formimidoyl-L-glutamate from L-histidine: step 3/3. This is Probable imidazolonepropionase (amdhd1) from Xenopus laevis (African clawed frog).